The chain runs to 382 residues: Lipid-A-disaccharide synthase (382 aa).

It belongs to the LpxB family.

It catalyses the reaction 2-N,3-O-bis[(3R)-3-hydroxytetradecanoyl]-alpha-D-glucosaminyl 1-phosphate + UDP-2-N,3-O-bis[(3R)-3-hydroxytetradecanoyl]-alpha-D-glucosamine = lipid A disaccharide (E. coli) + UDP + H(+). The enzyme catalyses a lipid X + a UDP-2-N,3-O-bis[(3R)-3-hydroxyacyl]-alpha-D-glucosamine = a lipid A disaccharide + UDP + H(+). The protein operates within glycolipid biosynthesis; lipid IV(A) biosynthesis; lipid IV(A) from (3R)-3-hydroxytetradecanoyl-[acyl-carrier-protein] and UDP-N-acetyl-alpha-D-glucosamine: step 5/6. Condensation of UDP-2,3-diacylglucosamine and 2,3-diacylglucosamine-1-phosphate to form lipid A disaccharide, a precursor of lipid A, a phosphorylated glycolipid that anchors the lipopolysaccharide to the outer membrane of the cell. The protein is Lipid-A-disaccharide synthase of Escherichia fergusonii (strain ATCC 35469 / DSM 13698 / CCUG 18766 / IAM 14443 / JCM 21226 / LMG 7866 / NBRC 102419 / NCTC 12128 / CDC 0568-73).